A 258-amino-acid polypeptide reads, in one-letter code: Aspartate/glutamate leucyltransferase (258 aa).

This sequence belongs to the R-transferase family. Bpt subfamily.

Its subcellular location is the cytoplasm. The catalysed reaction is N-terminal L-glutamyl-[protein] + L-leucyl-tRNA(Leu) = N-terminal L-leucyl-L-glutamyl-[protein] + tRNA(Leu) + H(+). It catalyses the reaction N-terminal L-aspartyl-[protein] + L-leucyl-tRNA(Leu) = N-terminal L-leucyl-L-aspartyl-[protein] + tRNA(Leu) + H(+). In terms of biological role, functions in the N-end rule pathway of protein degradation where it conjugates Leu from its aminoacyl-tRNA to the N-termini of proteins containing an N-terminal aspartate or glutamate. The sequence is that of Aspartate/glutamate leucyltransferase from Rhizobium etli (strain ATCC 51251 / DSM 11541 / JCM 21823 / NBRC 15573 / CFN 42).